Reading from the N-terminus, the 56-residue chain is Ferredoxin (56 aa).

4Fe-4S ferredoxin-type domains follow at residues 2–28 and 29–56; these read AYKIADSCVSCGACASECPVNAISQGD and SIFVIDADTCIDCGNCANVCPVGAPVQE. [4Fe-4S] cluster contacts are provided by Cys-9, Cys-12, Cys-15, Cys-19, Cys-38, Cys-41, Cys-44, and Cys-48.

The cofactor is [4Fe-4S] cluster.

Ferredoxins are iron-sulfur proteins that transfer electrons in a wide variety of metabolic reactions. The protein is Ferredoxin of Clostridium pasteurianum.